Here is a 351-residue protein sequence, read N- to C-terminus: Signal recognition particle receptor FtsY (351 aa).

GTP is bound by residues 156–163 (GINGTGKT), 238–242 (DTAGR), and 302–305 (TKLD).

The protein belongs to the GTP-binding SRP family. FtsY subfamily. In terms of assembly, part of the signal recognition particle protein translocation system, which is composed of SRP and FtsY. SRP is a ribonucleoprotein composed of Ffh and a 4.5S RNA molecule.

The protein resides in the cell membrane. The protein localises to the cytoplasm. It catalyses the reaction GTP + H2O = GDP + phosphate + H(+). Involved in targeting and insertion of nascent membrane proteins into the cytoplasmic membrane. Acts as a receptor for the complex formed by the signal recognition particle (SRP) and the ribosome-nascent chain (RNC). Interaction with SRP-RNC leads to the transfer of the RNC complex to the Sec translocase for insertion into the membrane, the hydrolysis of GTP by both Ffh and FtsY, and the dissociation of the SRP-FtsY complex into the individual components. In Buchnera aphidicola subsp. Schizaphis graminum (strain Sg), this protein is Signal recognition particle receptor FtsY.